A 162-amino-acid polypeptide reads, in one-letter code: Disulfide bond formation protein B (162 aa).

The Cytoplasmic segment spans residues 1 to 8 (MTPLFRKA). Residues 9 to 25 (VWLLFAVSVCAFAGSLA) form a helical membrane-spanning segment. The Periplasmic portion of the chain corresponds to 26–43 (AQYVLGMEPCVLCISQRL). Residues C35 and C38 are joined by a disulfide bond. Residues 44 to 60 (CVLATALCTAIVLMCRP) traverse the membrane as a helical segment. The Cytoplasmic portion of the chain corresponds to 61-67 (RRRAGGL). The chain crosses the membrane as a helical span at residues 68-85 (FGAVFISIPAVTGISVAA). Residues 86-141 (YQLWLQSLPPGTAPSCGAPWTFRLKGWSLFDWFEPVVRGFGNCAEPDYLLGVALPV) are Periplasmic-facing. C101 and C128 are oxidised to a cystine. Residues 142-160 (WSAAYFLAVVLTVWWAWAR) traverse the membrane as a helical segment. The Cytoplasmic segment spans residues 161 to 162 (AK).

The protein belongs to the DsbB family.

It localises to the cell inner membrane. Its function is as follows. Required for disulfide bond formation in some periplasmic proteins. Acts by oxidizing the DsbA protein. This chain is Disulfide bond formation protein B, found in Neisseria meningitidis serogroup C / serotype 2a (strain ATCC 700532 / DSM 15464 / FAM18).